The primary structure comprises 90 residues: U-scoloptoxin(15)-Sa3a (90 aa).

Residues 1-18 (MKMVYLGLFLIITSCVIS) form the signal peptide.

This sequence belongs to the scoloptoxin-15 family. Post-translationally, contains 3 disulfide bonds. Expressed by the venom gland.

The protein localises to the secreted. The protein is U-scoloptoxin(15)-Sa3a of Scolopendra alternans (Florida Keys giant centipede).